We begin with the raw amino-acid sequence, 827 residues long: Probable beta-glucosidase H (827 aa).

Aspartate 223 is a catalytic residue. In terms of domain architecture, PA14 spans 387 to 546 (RLLTNAVMHF…DSAEMVRSAV (160 aa)). N-linked (GlcNAc...) asparagine glycans are attached at residues asparagine 471, asparagine 594, asparagine 600, and asparagine 625.

It belongs to the glycosyl hydrolase 3 family.

The protein localises to the secreted. The catalysed reaction is Hydrolysis of terminal, non-reducing beta-D-glucosyl residues with release of beta-D-glucose.. Its pathway is glycan metabolism; cellulose degradation. Its function is as follows. Beta-glucosidases are one of a number of cellulolytic enzymes involved in the degradation of cellulosic biomass. Catalyzes the last step releasing glucose from the inhibitory cellobiose. In Aspergillus flavus (strain ATCC 200026 / FGSC A1120 / IAM 13836 / NRRL 3357 / JCM 12722 / SRRC 167), this protein is Probable beta-glucosidase H (bglH).